The chain runs to 458 residues: Bone morphogenetic protein 3 (458 aa).

The N-terminal stretch at 1–23 (MAECRPWLVLWVGCCGCLCLALG) is a signal peptide. The propeptide occupies 24 to 348 (ELLNDGLLAV…EQTLKKARRK (325 aa)). Residue Asn-107 is glycosylated (N-linked (GlcNAc...) asparagine). 2 disordered regions span residues 244 to 275 (DSVV…KKRS) and 303 to 335 (ERKP…SQTL). The span at 320-329 (NKKKLRKGSR) shows a compositional bias: basic residues. Cystine bridges form between Cys-356–Cys-423, Cys-385–Cys-455, and Cys-389–Cys-457. N-linked (GlcNAc...) asparagine glycosylation occurs at Asn-449.

It belongs to the TGF-beta family. Homodimer. Can form heterodimers with ADMP, BMP-2-I and/or BMP-2-II, and DERRIERE.

Its subcellular location is the secreted. In terms of biological role, dorsalizing factor. Antagonizes mesoderm formation by ventralizing BMPs. The chain is Bone morphogenetic protein 3 (bmp3) from Xenopus laevis (African clawed frog).